The sequence spans 248 residues: Deoxyribose-phosphate aldolase (248 aa).

Asp117 functions as the Proton donor/acceptor in the catalytic mechanism. Catalysis depends on Lys179, which acts as the Schiff-base intermediate with acetaldehyde. Catalysis depends on Lys208, which acts as the Proton donor/acceptor.

Belongs to the DeoC/FbaB aldolase family. DeoC type 1 subfamily.

Its subcellular location is the cytoplasm. It catalyses the reaction 2-deoxy-D-ribose 5-phosphate = D-glyceraldehyde 3-phosphate + acetaldehyde. It functions in the pathway carbohydrate degradation; 2-deoxy-D-ribose 1-phosphate degradation; D-glyceraldehyde 3-phosphate and acetaldehyde from 2-deoxy-alpha-D-ribose 1-phosphate: step 2/2. Catalyzes a reversible aldol reaction between acetaldehyde and D-glyceraldehyde 3-phosphate to generate 2-deoxy-D-ribose 5-phosphate. In Thermotoga maritima (strain ATCC 43589 / DSM 3109 / JCM 10099 / NBRC 100826 / MSB8), this protein is Deoxyribose-phosphate aldolase.